Reading from the N-terminus, the 1463-residue chain is DNA-directed RNA polymerase subunit beta'' (1463 aa).

Zn(2+) is bound by residues Cys-239, Cys-312, Cys-319, and Cys-322. 2 disordered regions span residues 836–869 (TFTG…ETRM) and 987–1007 (TNRS…AQAR). The span at 860–869 (AANSSHETRM) shows a compositional bias: polar residues. The segment covering 987–996 (TNRSKTRRNA) has biased composition (basic residues). Residues 997–1007 (SGKTQVKAQAR) are compositionally biased toward polar residues.

This sequence belongs to the RNA polymerase beta' chain family. RpoC2 subfamily. In plastids the minimal PEP RNA polymerase catalytic core is composed of four subunits: alpha, beta, beta', and beta''. When a (nuclear-encoded) sigma factor is associated with the core the holoenzyme is formed, which can initiate transcription. Zn(2+) is required as a cofactor.

It localises to the plastid. It is found in the chloroplast. The enzyme catalyses RNA(n) + a ribonucleoside 5'-triphosphate = RNA(n+1) + diphosphate. In terms of biological role, DNA-dependent RNA polymerase catalyzes the transcription of DNA into RNA using the four ribonucleoside triphosphates as substrates. This Nephroselmis olivacea (Green alga) protein is DNA-directed RNA polymerase subunit beta''.